The sequence spans 681 residues: Type VI secretion system spike protein VgrG1 (681 aa).

The interval 621-640 (NSGGSPSSGSGWGGKSPVDP) is disordered.

It belongs to the VgrG protein family.

It localises to the secreted. It carries out the reaction L-arginyl-[protein] + NAD(+) = N(omega)-(ADP-D-ribosyl)-L-arginyl-[protein] + nicotinamide + H(+). In terms of biological role, part of the type VI secretion system specialized secretion system, which delivers several virulence factors in both prokaryotic and eukaryotic cells during infection. Acts directly as an secreted effector with an actin ADP-ribosyltransferase activity that disrupts the host actin cytoskeleton, leading to a decrease in host cell viability and an increase in apoptosis. The chain is Type VI secretion system spike protein VgrG1 (vgrG1) from Aeromonas hydrophila.